The primary structure comprises 712 residues: Transcriptional regulator GZF3 (712 aa).

Residues 1–13 show a composition bias toward polar residues; the sequence is MSMSDIQQRPQIP. Disordered stretches follow at residues 1-20, 27-135, 173-280, 377-533, and 596-712; these read MSMS…TAAV, NVNT…GPVC, SLKT…HHHL, DVSS…GNNF, and LNNN…KVKI. Composition is skewed to low complexity over residues 27 to 84 and 107 to 131; these read NVNT…EQSS and PKTG…ISMS. The GATA-type zinc-finger motif lies at 135-159; that stretch reads CGNCQTQTTPLWRRDETGQVLCNAC. A compositionally biased stretch (low complexity) spans 186–199; the sequence is KQNGSNSQSSKSSG. The span at 213–223 shows a compositional bias: basic residues; the sequence is GKKSPKSKKKS. Residues 246 to 261 show a composition bias toward polar residues; it reads ATSNNTPTFKSTTSQS. Over residues 268 to 280 the composition is skewed to basic residues; that stretch reads NHHHQHHNHHHHL. A compositionally biased stretch (low complexity) spans 379–414; sequence SSINGSSTSLSSSSASSSIFSSVAPSTSSSSSLSNG. Composition is skewed to polar residues over residues 429–447 and 484–498; these read SKIS…TPLQ and QQSM…RSPI. Low complexity-rich tracts occupy residues 499 to 532 and 596 to 616; these read NGNQ…NGNN and LNNN…QPQQ. Residues 545-598 adopt a coiled-coil conformation; it reads TRISELELVNDLYRTRIMELEAMEQAARLRENSMKKRLDEVMNLQINYQNLLNN. The segment covering 631–667 has biased composition (polar residues); that stretch reads DQGSQSISPNVSITGSTTITSPNSRSKIISETTPTHH.

The protein localises to the nucleus. Its function is as follows. Probable transcription factor involved in response to fluconazole, LiCl, and copper. The protein is Transcriptional regulator GZF3 (GZF3) of Candida albicans (strain SC5314 / ATCC MYA-2876) (Yeast).